We begin with the raw amino-acid sequence, 138 residues long: Large ribosomal subunit protein bL17 (138 aa).

It belongs to the bacterial ribosomal protein bL17 family. As to quaternary structure, part of the 50S ribosomal subunit. Contacts protein L32.

The protein is Large ribosomal subunit protein bL17 of Bradyrhizobium diazoefficiens (strain JCM 10833 / BCRC 13528 / IAM 13628 / NBRC 14792 / USDA 110).